A 424-amino-acid chain; its full sequence is MADPLADFGSNVDLTVQEILLAASQHDVPKLRRLIRSNDKDGNPANVKDPETGFSPLHAAIAACEPDEAQTETNGVNGETSSASTEQKSLVQSAAETVKYLLQEGAIWNDLDLNDETPGCIARRLGLTELYEMIVDAGVRAELLLNRLDGYEPLSDDEDDQETGQGEDAANEPAAEEDQDGAPELVETTAADASAAEASTEGPGPDVTSSRYLDSNLTFTNDRLLDQDQNGVMMAWETEIMSRSAKKLLPTTGLRVMNIGHGMGIVDGFIQEQSPAAHHIVEAHPDVVAEMKRKGWHEKPGVVIHEGRWQDILPALVAQGETFDAIYYDTFAESYADFREFFSEQVIGLLEQDGKWGFFNGMGADRQISYDVYQKVVEMDLFEAGFDVEWEEIKVPKLEGEWTGVRRPYWVVDNYRLPLCKFMD.

2 disordered regions span residues Asp-67–Ser-89 and Tyr-151–Tyr-212. A compositionally biased stretch (polar residues) spans Thr-71–Ser-89. Low complexity-rich tracts occupy residues Thr-163–Pro-173 and Glu-187–Glu-201. An RMT2 domain is found at Pro-205–Asp-424. Residues Tyr-212, Met-241, His-261–Val-266, Glu-282–His-284, Trp-309–Gln-310, and Asp-329 contribute to the S-adenosyl-L-methionine site.

It belongs to the class I-like SAM-binding methyltransferase superfamily. RMT2 methyltransferase family. Monomer.

It is found in the cytoplasm. Its subcellular location is the nucleus. S-adenosyl-L-methionine-dependent protein-arginine N-methyltransferase that methylates the delta-nitrogen atom of arginine residues to form N5-methylarginine (type IV) in target proteins. Monomethylates ribosomal protein L12. This Aspergillus fumigatus (strain ATCC MYA-4609 / CBS 101355 / FGSC A1100 / Af293) (Neosartorya fumigata) protein is Protein arginine N-methyltransferase 2.